A 61-amino-acid polypeptide reads, in one-letter code: Photosystem II reaction center protein Z (61 aa).

Transmembrane regions (helical) follow at residues 8–28 (ALLV…VLFS) and 41–61 (LVGS…SFFK).

Belongs to the PsbZ family. PSII is composed of 1 copy each of membrane proteins PsbA, PsbB, PsbC, PsbD, PsbE, PsbF, PsbH, PsbI, PsbJ, PsbK, PsbL, PsbM, PsbT, PsbX, PsbY, PsbZ, Psb30/Ycf12, peripheral proteins PsbO, CyanoQ (PsbQ), PsbU, PsbV and a large number of cofactors. It forms dimeric complexes.

The protein localises to the cellular thylakoid membrane. Functionally, may control the interaction of photosystem II (PSII) cores with the light-harvesting antenna, regulates electron flow through the 2 photosystem reaction centers. PSII is a light-driven water plastoquinone oxidoreductase, using light energy to abstract electrons from H(2)O, generating a proton gradient subsequently used for ATP formation. The polypeptide is Photosystem II reaction center protein Z (Synechococcus sp. (strain JA-3-3Ab) (Cyanobacteria bacterium Yellowstone A-Prime)).